Reading from the N-terminus, the 542-residue chain is Chaperonin GroEL 1 (542 aa).

ATP contacts are provided by residues 29-32, 86-90, Gly413, 477-479, and Asp493; these read TLGP, DGTTT, and NAA.

The protein belongs to the chaperonin (HSP60) family. Forms a cylinder of 14 subunits composed of two heptameric rings stacked back-to-back. Interacts with the co-chaperonin GroES.

It localises to the cytoplasm. It carries out the reaction ATP + H2O + a folded polypeptide = ADP + phosphate + an unfolded polypeptide.. Functionally, together with its co-chaperonin GroES, plays an essential role in assisting protein folding. The GroEL-GroES system forms a nano-cage that allows encapsulation of the non-native substrate proteins and provides a physical environment optimized to promote and accelerate protein folding. This is Chaperonin GroEL 1 from Kineococcus radiotolerans (strain ATCC BAA-149 / DSM 14245 / SRS30216).